Reading from the N-terminus, the 952-residue chain is Protocadherin-20 (952 aa).

A signal peptide spans 1-60; the sequence is MRGRGNARSLLVQAVSLRPATWHPCLDMGHLHRPSSRTSHRNLPHVFLLFLFVGPFNCLA. The Extracellular portion of the chain corresponds to 61 to 891; that stretch reads SYSRATELLY…VESMSCMPTL (831 aa). Cadherin domains are found at residues 64–210, 211–321, 322–536, 537–640, 641–743, and 747–864; these read RATE…APQF, PISE…CPLF, IDSQ…APVF, LQPL…SPRF, INKD…PPLV, and QSNM…EPEI. N-linked (GlcNAc...) asparagine glycosylation occurs at Asn-135. Residues Asn-327 and Asn-333 are each glycosylated (N-linked (GlcNAc...) asparagine). N-linked (GlcNAc...) asparagine glycosylation is found at Asn-681, Asn-749, Asn-804, Asn-845, and Asn-850. Residues 892 to 912 traverse the membrane as a helical segment; sequence VALSVISLGSITLVTGMGIYI. Residues 913–952 are Cytoplasmic-facing; that stretch reads CLRKGKKHHREDDNLEVQIPLKGKIDLCMRERKPVDISNI.

The protein localises to the cell membrane. Its function is as follows. Potential calcium-dependent cell-adhesion protein. The sequence is that of Protocadherin-20 (Pcdh20) from Mus musculus (Mouse).